Consider the following 162-residue polypeptide: Caveolin-2 (162 aa).

Residues 1 to 86 lie on the Cytoplasmic side of the membrane; the sequence is MGLETEKADV…FEISKYVMYK (86 aa). Residue tyrosine 19 is modified to Phosphotyrosine; by SRC. Serine 20 and serine 23 each carry phosphoserine. Tyrosine 27 is modified (phosphotyrosine; by SRC). Serine 36 carries the phosphoserine modification. Positions 87 to 107 form an intramembrane region, helical; that stretch reads FLTVFLAIPLAFIAGILFATL. At 108–162 the chain is on the cytoplasmic side; sequence SCLHIWILMPFVKTCLMVLPSVQTIWKSVTDVIIAPLCTSVGRCFSSVSLQLSQD.

This sequence belongs to the caveolin family. In terms of assembly, monomer or homodimer. Interacts with CAV1; the interaction forms a stable heterooligomeric complex that is required for targeting to lipid rafts and for caveolae formation. Tyrosine phosphorylated forms do not form heterooligomers with the Tyr-19-phosphorylated form existing as a monomer or dimer, and the Tyr-27-form as a monomer only. Interacts (tyrosine phosphorylated form) with the SH2 domain-containing proteins, RASA1, NCK1 and SRC. Interacts (tyrosine phosphorylated form) with INSR, the interaction (Tyr-27-phosphorylated form) is increased on insulin stimulation. Interacts (Tyr-19 phosphorylated form) with MAPK1 (phosphorylated form); the interaction, promoted by insulin, leads to nuclear location and MAPK1 activation. Interacts with STAT3; the interaction is increased on insulin-induced tyrosine phosphorylation leading to STAT activation. Post-translationally, phosphorylated on serine and tyrosine residues. CAV1 promotes phosphorylation on Ser-23 which then targets the complex to the plasma membrane, lipid rafts and caveolae. Phosphorylation on Ser-36 appears to modulate mitosis in endothelial cells. Phosphorylation on both Tyr-19 and Tyr-27 is required for insulin-induced 'Ser-727' phosphorylation of STAT3 and its activation. Phosphorylation on Tyr-19 is required for insulin-induced phosphorylation of MAPK1 and DNA binding of STAT3. Tyrosine phosphorylation is induced by both EGF and insulin (By. similarity).

The protein resides in the nucleus. It is found in the cytoplasm. The protein localises to the golgi apparatus membrane. Its subcellular location is the cell membrane. It localises to the membrane. The protein resides in the caveola. In terms of biological role, may act as a scaffolding protein within caveolar membranes. Interacts directly with G-protein alpha subunits and can functionally regulate their activity. Acts as an accessory protein in conjunction with CAV1 in targeting to lipid rafts and driving caveolae formation. The Ser-36 phosphorylated form has a role in modulating mitosis in endothelial cells. Positive regulator of cellular mitogenesis of the MAPK signaling pathway. Required for the insulin-stimulated nuclear translocation and activation of MAPK1 and STAT3, and the subsequent regulation of cell cycle progression. The polypeptide is Caveolin-2 (CAV2) (Gorilla gorilla gorilla (Western lowland gorilla)).